Here is a 332-residue protein sequence, read N- to C-terminus: Putative threonine dehydratase (332 aa).

An N6-(pyridoxal phosphate)lysine modification is found at lysine 56.

This sequence belongs to the serine/threonine dehydratase family. The cofactor is pyridoxal 5'-phosphate.

The enzyme catalyses L-threonine = 2-oxobutanoate + NH4(+). Its pathway is amino-acid biosynthesis; L-isoleucine biosynthesis; 2-oxobutanoate from L-threonine: step 1/1. The chain is Putative threonine dehydratase from Sinorhizobium fredii (strain NBRC 101917 / NGR234).